Here is an 85-residue protein sequence, read N- to C-terminus: Toxin BmKa1 (85 aa).

Positions 1–19 are cleaved as a signal peptide; it reads MNYLVFFSLALLLMTGVGS. Positions 21-83 constitute an LCN-type CS-alpha/beta domain; it reads RDGYIADDKN…VPIRVPGKCN (63 aa). Intrachain disulfides connect Cys-31-Cys-82, Cys-35-Cys-55, Cys-41-Cys-65, and Cys-45-Cys-67.

This sequence belongs to the long (4 C-C) scorpion toxin superfamily. Sodium channel inhibitor family. Alpha subfamily. Expressed by the venom gland.

It localises to the secreted. In terms of biological role, alpha toxins bind voltage-independently at site-3 of sodium channels (Nav) and inhibit the inactivation of the activated channels, thereby blocking neuronal transmission. This is Toxin BmKa1 from Olivierus martensii (Manchurian scorpion).